The sequence spans 195 residues: N-terminal acetyltransferase B complex catalytic subunit NAT3 (195 aa).

In terms of domain architecture, N-acetyltransferase spans Thr2–Ala172.

It belongs to the acetyltransferase family. GNAT subfamily. Component of the N-terminal acetyltransferase B (NatB) complex, which is composed of NAT3 and MDM20.

The protein localises to the cytoplasm. The catalysed reaction is N-terminal L-methionyl-L-asparaginyl-[protein] + acetyl-CoA = N-terminal N(alpha)-acetyl-L-methionyl-L-asparaginyl-[protein] + CoA + H(+). It carries out the reaction N-terminal L-methionyl-L-glutaminyl-[protein] + acetyl-CoA = N-terminal N(alpha)-acetyl-L-methionyl-L-glutaminyl-[protein] + CoA + H(+). It catalyses the reaction N-terminal L-methionyl-L-aspartyl-[protein] + acetyl-CoA = N-terminal N(alpha)-acetyl-L-methionyl-L-aspartyl-[protein] + CoA + H(+). The enzyme catalyses N-terminal L-methionyl-L-glutamyl-[protein] + acetyl-CoA = N-terminal N(alpha)-acetyl-L-methionyl-L-glutamyl-[protein] + CoA + H(+). Its function is as follows. Catalytic subunit of the NatB N-terminal acetyltransferase, which catalyzes acetylation of the amino-terminal methionine residues of all proteins beginning with Met-Asp or Met-Glu and of some proteins beginning with Met-Asn, Met-Gln or Met-Met. NatB acetylates TPM1 protein and regulates tropomyocin-actin interactions, it is presumed to N-acetylate 15% of all yeast proteins. The sequence is that of N-terminal acetyltransferase B complex catalytic subunit NAT3 from Saccharomyces cerevisiae (strain ATCC 204508 / S288c) (Baker's yeast).